Here is a 229-residue protein sequence, read N- to C-terminus: Endonuclease V (229 aa).

Belongs to the endonuclease V family.

The protein localises to the cytoplasm. The enzyme catalyses Endonucleolytic cleavage at apurinic or apyrimidinic sites to products with a 5'-phosphate.. Functionally, DNA repair enzyme involved in the repair of deaminated bases. Selectively cleaves double-stranded DNA at the second phosphodiester bond 3' to a deoxyinosine leaving behind the intact lesion on the nicked DNA. This Methanopyrus kandleri (strain AV19 / DSM 6324 / JCM 9639 / NBRC 100938) protein is Endonuclease V.